Consider the following 355-residue polypeptide: UDP-N-acetylglucosamine--N-acetylmuramyl-(pentapeptide) pyrophosphoryl-undecaprenol N-acetylglucosamine transferase (355 aa).

Residues 15–17, asparagine 127, arginine 163, serine 191, isoleucine 244, 263–268, and glutamine 288 each bind UDP-N-acetyl-alpha-D-glucosamine; these read TGG and ALTVSE.

Belongs to the glycosyltransferase 28 family. MurG subfamily.

The protein localises to the cell inner membrane. It carries out the reaction di-trans,octa-cis-undecaprenyl diphospho-N-acetyl-alpha-D-muramoyl-L-alanyl-D-glutamyl-meso-2,6-diaminopimeloyl-D-alanyl-D-alanine + UDP-N-acetyl-alpha-D-glucosamine = di-trans,octa-cis-undecaprenyl diphospho-[N-acetyl-alpha-D-glucosaminyl-(1-&gt;4)]-N-acetyl-alpha-D-muramoyl-L-alanyl-D-glutamyl-meso-2,6-diaminopimeloyl-D-alanyl-D-alanine + UDP + H(+). Its pathway is cell wall biogenesis; peptidoglycan biosynthesis. Functionally, cell wall formation. Catalyzes the transfer of a GlcNAc subunit on undecaprenyl-pyrophosphoryl-MurNAc-pentapeptide (lipid intermediate I) to form undecaprenyl-pyrophosphoryl-MurNAc-(pentapeptide)GlcNAc (lipid intermediate II). This Shigella boydii serotype 18 (strain CDC 3083-94 / BS512) protein is UDP-N-acetylglucosamine--N-acetylmuramyl-(pentapeptide) pyrophosphoryl-undecaprenol N-acetylglucosamine transferase.